The chain runs to 193 residues: 21 kDa protein (193 aa).

An N-terminal signal peptide occupies residues 1 to 22 (MKLSKSTLVFSALLVILAAASA).

This chain is 21 kDa protein, found in Daucus carota (Wild carrot).